A 509-amino-acid polypeptide reads, in one-letter code: Heat shock 70 kDa protein 14-A (509 aa).

The protein belongs to the heat shock protein 70 family. As to quaternary structure, component of ribosome-associated complex (RAC).

The protein localises to the cytoplasm. It is found in the cytosol. In terms of biological role, component of the ribosome-associated complex (RAC), a complex involved in folding or maintaining nascent polypeptides in a folding-competent state. This Xenopus laevis (African clawed frog) protein is Heat shock 70 kDa protein 14-A (hspa14-a).